The following is a 117-amino-acid chain: Large ribosomal subunit protein bL20c (117 aa).

This sequence belongs to the bacterial ribosomal protein bL20 family.

It localises to the plastid. The protein resides in the chloroplast. Binds directly to 23S ribosomal RNA and is necessary for the in vitro assembly process of the 50S ribosomal subunit. It is not involved in the protein synthesizing functions of that subunit. The polypeptide is Large ribosomal subunit protein bL20c (Thalassiosira pseudonana (Marine diatom)).